The chain runs to 488 residues: Inosine-5'-monophosphate dehydrogenase (488 aa).

CBS domains lie at 95–153 (VISN…SIKI) and 157–216 (MTKE…AKDE). Residues Asp-250 and 300-302 (GIG) each bind NAD(+). K(+)-binding residues include Gly-302 and Gly-304. Residue Ser-305 coordinates IMP. Residue Cys-307 coordinates K(+). Catalysis depends on Cys-307, which acts as the Thioimidate intermediate. Residues 340-342 (DGG), 363-364 (GS), and 387-391 (YRGMG) contribute to the IMP site. Residue Arg-403 is the Proton acceptor of the active site. Residue Glu-417 coordinates IMP. The tract at residues 467–488 (AGLAESHPHDVQITKESPNYSF) is disordered. 3 residues coordinate K(+): Glu-471, Ser-472, and His-473.

Belongs to the IMPDH/GMPR family. Homotetramer. K(+) serves as cofactor.

The enzyme catalyses IMP + NAD(+) + H2O = XMP + NADH + H(+). The protein operates within purine metabolism; XMP biosynthesis via de novo pathway; XMP from IMP: step 1/1. Mycophenolic acid (MPA) is a non-competitive inhibitor that prevents formation of the closed enzyme conformation by binding to the same site as the amobile flap. In contrast, mizoribine monophosphate (MZP) is a competitive inhibitor that induces the closed conformation. MPA is a potent inhibitor of mammalian IMPDHs but a poor inhibitor of the bacterial enzymes. MZP is a more potent inhibitor of bacterial IMPDH. Its function is as follows. Catalyzes the conversion of inosine 5'-phosphate (IMP) to xanthosine 5'-phosphate (XMP), the first committed and rate-limiting step in the de novo synthesis of guanine nucleotides, and therefore plays an important role in the regulation of cell growth. The sequence is that of Inosine-5'-monophosphate dehydrogenase from Staphylococcus saprophyticus subsp. saprophyticus (strain ATCC 15305 / DSM 20229 / NCIMB 8711 / NCTC 7292 / S-41).